The sequence spans 1155 residues: DNA-directed RNA polymerase subunit beta (1155 aa).

Belongs to the RNA polymerase beta chain family. The RNAP catalytic core consists of 2 alpha, 1 beta, 1 beta' and 1 omega subunit. When a sigma factor is associated with the core the holoenzyme is formed, which can initiate transcription.

It carries out the reaction RNA(n) + a ribonucleoside 5'-triphosphate = RNA(n+1) + diphosphate. DNA-dependent RNA polymerase catalyzes the transcription of DNA into RNA using the four ribonucleoside triphosphates as substrates. This chain is DNA-directed RNA polymerase subunit beta, found in Borrelia recurrentis (strain A1).